The primary structure comprises 662 residues: Fructose-1,6-bisphosphatase class 3 (662 aa).

The protein belongs to the FBPase class 3 family. The cofactor is Mn(2+).

The enzyme catalyses beta-D-fructose 1,6-bisphosphate + H2O = beta-D-fructose 6-phosphate + phosphate. The protein operates within carbohydrate biosynthesis; gluconeogenesis. This is Fructose-1,6-bisphosphatase class 3 from Clostridium tetani (strain Massachusetts / E88).